We begin with the raw amino-acid sequence, 548 residues long: Phenylalanine--tRNA ligase beta subunit (548 aa).

Residues 271–346 (LSEAAAKLDP…ISIGYEALGP (76 aa)) form the B5 domain. Residues D324, D330, E333, and D334 each contribute to the Mg(2+) site.

This sequence belongs to the phenylalanyl-tRNA synthetase beta subunit family. Type 2 subfamily. In terms of assembly, tetramer of two alpha and two beta subunits. Mg(2+) is required as a cofactor.

Its subcellular location is the cytoplasm. It catalyses the reaction tRNA(Phe) + L-phenylalanine + ATP = L-phenylalanyl-tRNA(Phe) + AMP + diphosphate + H(+). The protein is Phenylalanine--tRNA ligase beta subunit of Aeropyrum pernix (strain ATCC 700893 / DSM 11879 / JCM 9820 / NBRC 100138 / K1).